The sequence spans 129 residues: Small ribosomal subunit protein uS11 (129 aa).

The protein belongs to the universal ribosomal protein uS11 family. Part of the 30S ribosomal subunit. Interacts with proteins S7 and S18. Binds to IF-3.

Functionally, located on the platform of the 30S subunit, it bridges several disparate RNA helices of the 16S rRNA. Forms part of the Shine-Dalgarno cleft in the 70S ribosome. This Roseobacter denitrificans (strain ATCC 33942 / OCh 114) (Erythrobacter sp. (strain OCh 114)) protein is Small ribosomal subunit protein uS11.